The primary structure comprises 336 residues: Dihydroorotate dehydrogenase (quinone) (336 aa).

FMN-binding positions include 62-66 (AGLDK) and T86. Residue K66 participates in substrate binding. 111–115 (NRMGF) is a binding site for substrate. Residues N139 and N172 each contribute to the FMN site. N172 contacts substrate. Residue S175 is the Nucleophile of the active site. Position 177 (N177) interacts with substrate. Residues K217 and T245 each coordinate FMN. Residue 246 to 247 (NT) participates in substrate binding. Residues G268, G297, and 318 to 319 (YS) each bind FMN.

Belongs to the dihydroorotate dehydrogenase family. Type 2 subfamily. As to quaternary structure, monomer. It depends on FMN as a cofactor.

It is found in the cell membrane. The enzyme catalyses (S)-dihydroorotate + a quinone = orotate + a quinol. The protein operates within pyrimidine metabolism; UMP biosynthesis via de novo pathway; orotate from (S)-dihydroorotate (quinone route): step 1/1. In terms of biological role, catalyzes the conversion of dihydroorotate to orotate with quinone as electron acceptor. The protein is Dihydroorotate dehydrogenase (quinone) of Aliivibrio fischeri (strain MJ11) (Vibrio fischeri).